The sequence spans 224 residues: UPF0758 protein IL0240 (224 aa).

The MPN domain maps to 102 to 224; sequence GFTEPTMVKD…PISFAERGLL (123 aa). Positions 173, 175, and 186 each coordinate Zn(2+). Residues 173-186 carry the JAMM motif motif; it reads HNHPSGVAEPSQAD.

It belongs to the UPF0758 family.

This Idiomarina loihiensis (strain ATCC BAA-735 / DSM 15497 / L2-TR) protein is UPF0758 protein IL0240.